The following is a 231-amino-acid chain: Beta-casein (231 aa).

The signal sequence occupies residues 1–15 (MKVFILACLVALALA). S24 is subject to Phosphoserine. The residue at position 27 (T27) is a Phosphothreonine. A phosphoserine mark is found at S29, S31, and S32.

Belongs to the beta-casein family. As to expression, mammary gland specific. Secreted in milk.

The protein localises to the secreted. Important role in determination of the surface properties of the casein micelles. The sequence is that of Beta-casein (Csn2) from Rattus norvegicus (Rat).